We begin with the raw amino-acid sequence, 373 residues long: Trifolitoxin-processing protein TfxB (373 aa).

It to E.coli McbC which is involved in the processing of microcin B17 (MCCB17).

It is found in the cytoplasm. In terms of biological role, the actions of the proteins TfxB, TfxD and TfxF are implicated in the processing of the inactive trifolitoxin (TfxA) precursor into the active peptide. This chain is Trifolitoxin-processing protein TfxB (tfxB), found in Rhizobium leguminosarum bv. trifolii.